The chain runs to 646 residues: UvrABC system protein B (646 aa).

One can recognise a Helicase ATP-binding domain in the interval 25–412 (NGIKAGMREQ…QNIVEQIIRP (388 aa)). Residue 38 to 45 (GVTGSGKT) participates in ATP binding. Residues 91 to 114 (YYDFYQPEAYIPQTDTYIDKEASI) carry the Beta-hairpin motif. One can recognise a Helicase C-terminal domain in the interval 428–594 (QVDDLLSEIR…STRRTLREEE (167 aa)). The UVR domain maps to 611–646 (ELIIKDLEAEMRDAARNLEFERAARIRDRIMSLKSN).

It belongs to the UvrB family. Forms a heterotetramer with UvrA during the search for lesions. Interacts with UvrC in an incision complex.

The protein localises to the cytoplasm. In terms of biological role, the UvrABC repair system catalyzes the recognition and processing of DNA lesions. A damage recognition complex composed of 2 UvrA and 2 UvrB subunits scans DNA for abnormalities. Upon binding of the UvrA(2)B(2) complex to a putative damaged site, the DNA wraps around one UvrB monomer. DNA wrap is dependent on ATP binding by UvrB and probably causes local melting of the DNA helix, facilitating insertion of UvrB beta-hairpin between the DNA strands. Then UvrB probes one DNA strand for the presence of a lesion. If a lesion is found the UvrA subunits dissociate and the UvrB-DNA preincision complex is formed. This complex is subsequently bound by UvrC and the second UvrB is released. If no lesion is found, the DNA wraps around the other UvrB subunit that will check the other stand for damage. In Methanothermobacter thermautotrophicus (strain ATCC 29096 / DSM 1053 / JCM 10044 / NBRC 100330 / Delta H) (Methanobacterium thermoautotrophicum), this protein is UvrABC system protein B.